The sequence spans 570 residues: Auxin efflux carrier component 6 (570 aa).

Residues 1 to 6 (MITGNE) are Extracellular-facing. Residues 7–27 (FYTVMCAMAPLYFAMFVAYGS) form a helical membrane-spanning segment. Residues 28–38 (VKWCKIFTPAQ) lie on the Cytoplasmic side of the membrane. Residues 39 to 59 (CSGINRFVSVFAVPVLSFHFI) form a helical membrane-spanning segment. Position 51 (Val-51) interacts with (indol-3-yl)acetate. Over 60-70 (SQNNPYKMDTM) the chain is Extracellular. The chain crosses the membrane as a helical span at residues 71-91 (FILADTLSKIFVFVLLSLWAV). Residues 92–100 (FFKAGGLDW) are Cytoplasmic-facing. Residues 101–121 (LITLFSIATLPNTLVMGIPLL) traverse the membrane as a helical segment. 2 residues coordinate (indol-3-yl)acetate: Asn-112 and Leu-114. Residues 122–131 (QAMYGDYTQT) lie on the Extracellular side of the membrane. A helical membrane pass occupies residues 132–152 (LMVQLVVLQCIIWYTLLLFLF). Tyr-145 contacts (indol-3-yl)acetate. At 153–430 (ELRAARLLIR…LSRNPNTYSS (278 aa)) the chain is on the cytoplasmic side. 2 positions are modified to phosphoserine: Ser-230 and Ser-308. Residues 431–451 (LLGLVWSLISFKWNIPMPNIV) traverse the membrane as a helical segment. Topologically, residues 452 to 454 (DFS) are extracellular. The helical transmembrane segment at 455–475 (IKIISDAGLGMAMFSLGLFMA) threads the bilayer. Topologically, residues 476–491 (LQPKMIPCGAKKATMG) are cytoplasmic. Residues 492 to 512 (MLIRFISGPLFMAGASLLVGL) traverse the membrane as a helical segment. Residues 513 to 515 (RGS) lie on the Extracellular side of the membrane. The chain crosses the membrane as a helical span at residues 516-536 (RLHAAIVQAALPQGIVPFVFA). (indol-3-yl)acetate-binding residues include Ile-530 and Val-531. The Cytoplasmic portion of the chain corresponds to 537 to 549 (REYNLHPDLLSTL). The chain crosses the membrane as a helical span at residues 550–570 (VIFGMIVSLPVTILYYVLLGL).

This sequence belongs to the auxin efflux carrier (TC 2.A.69.1) family. Homodimer. In terms of tissue distribution, expressed in the vasculature of the primary root, cotyledons, floral stem, sepals and the main transmitting tract of the reproductive silique. Expressed in embryos, shoot meristem, root tip and lateral root meristems. Expressed in the nectaries and the floral organ boundaries of the anthers. Detected in pollen. Expressed in broad subepidermal domains that narrowed to sites of vein formation. Expressed in veins of mature leaves.

The protein resides in the endoplasmic reticulum membrane. Its function is as follows. Component of the intracellular auxin-transport pathway. Regulates auxin transport and auxin homeostasis. Directly involved in the regulation of nectar production. Involved in unfolded protein response (UPR) activation. Involved in the control of vein patterning. Redundantly with PIN8, inhibits the vein-formation-promoting functions of PIN5. PIN5, PIN6, and PIN8 control vein network geometry, but they are expressed in mutually exclusive domains of leaf vascular cells. The polypeptide is Auxin efflux carrier component 6 (Arabidopsis thaliana (Mouse-ear cress)).